The chain runs to 356 residues: Magnesium-protoporphyrin IX monomethyl ester [oxidative] cyclase (356 aa).

The protein belongs to the AcsF family. The cofactor is Fe cation.

It catalyses the reaction Mg-protoporphyrin IX 13-monomethyl ester + 3 NADPH + 3 O2 + 2 H(+) = 3,8-divinyl protochlorophyllide a + 3 NADP(+) + 5 H2O. Its pathway is porphyrin-containing compound metabolism; chlorophyll biosynthesis (light-independent). Functionally, catalyzes the formation of the isocyclic ring in chlorophyll biosynthesis. Mediates the cyclase reaction, which results in the formation of divinylprotochlorophyllide (Pchlide) characteristic of all chlorophylls from magnesium-protoporphyrin IX 13-monomethyl ester (MgPMME). The sequence is that of Magnesium-protoporphyrin IX monomethyl ester [oxidative] cyclase from Parasynechococcus marenigrum (strain WH8102).